The sequence spans 352 residues: Probable cytosolic iron-sulfur protein assembly protein CIAO1 homolog (352 aa).

WD repeat units lie at residues 14–53, 63–102, 107–146, 152–191, 200–240, 268–306, and 319–352; these read GHDD…PSEQ, CHTR…WEQV, GHEN…EFEC, GHSQ…WGCA, GHES…TSTP, HHRR…LTQP, and AHGA…WWLR.

This sequence belongs to the WD repeat CIA1 family.

Its function is as follows. Essential component of the cytosolic iron-sulfur (Fe/S) protein assembly machinery. Required for the maturation of extramitochondrial Fe/S proteins. This Chlamydomonas reinhardtii (Chlamydomonas smithii) protein is Probable cytosolic iron-sulfur protein assembly protein CIAO1 homolog.